Consider the following 495-residue polypeptide: D-hydantoinase/dihydropyrimidinase (495 aa).

Positions 59, 61, and 150 each coordinate Zn(2+). Lysine 150 bears the N6-carboxylysine mark. Tyrosine 155 is a binding site for substrate. The Zn(2+) site is built by histidine 183 and histidine 239. Serine 289 contributes to the substrate binding site. Aspartate 316 serves as a coordination point for Zn(2+). Asparagine 337 is a binding site for substrate.

It belongs to the metallo-dependent hydrolases superfamily. Hydantoinase/dihydropyrimidinase family. In terms of assembly, homotetramer. The cofactor is Zn(2+). Post-translationally, carboxylation allows a single lysine to coordinate two zinc ions.

The enzyme catalyses 5,6-dihydrouracil + H2O = 3-(carbamoylamino)propanoate + H(+). Catalyzes the hydrolysis of dihydropyrimidines and of the structurally related DL-5-mono-substituted hydantoins, to produce N-carbamoyl-D-amino acids. In Pseudomonas putida (Arthrobacter siderocapsulatus), this protein is D-hydantoinase/dihydropyrimidinase.